The sequence spans 211 residues: MHSIAIFGGTFDPVHNGHIKTSLAIQANFGFDSYYFLPCKSPAIKPPSFASSEQRVEMLKLALKPYPDFKIDTRELDRDTPSYMVYTLQSFRQEYTDSSLTLIIGYDGLLNLPQWYQWEKIISLANLLVINREEFFQKPVPKSVQTLLNQYRNDDKNILLNHHAGSICLYNAGHYDISSTKIREQLKQHKDVKNNLPDLVYDYIKKQELYQ.

This sequence belongs to the NadD family.

It catalyses the reaction nicotinate beta-D-ribonucleotide + ATP + H(+) = deamido-NAD(+) + diphosphate. It participates in cofactor biosynthesis; NAD(+) biosynthesis; deamido-NAD(+) from nicotinate D-ribonucleotide: step 1/1. Catalyzes the reversible adenylation of nicotinate mononucleotide (NaMN) to nicotinic acid adenine dinucleotide (NaAD). This chain is Probable nicotinate-nucleotide adenylyltransferase, found in Legionella pneumophila (strain Lens).